Reading from the N-terminus, the 445-residue chain is Dolichyl-diphosphooligosaccharide--protein glycosyltransferase 48 kDa subunit (445 aa).

The N-terminal stretch at 1–20 (MRWLPGLLLIASIGFHQSLA) is a signal peptide. Topologically, residues 21 to 405 (DRVLVLGETA…YERFIRSAYP (385 aa)) are lumenal. A helical membrane pass occupies residues 406-426 (YYASSFSMMAGLVLFSIVYLY). The Cytoplasmic segment spans residues 427–445 (HKDTPVKGAKVLDSEKKKN).

This sequence belongs to the DDOST 48 kDa subunit family. In terms of assembly, component of the oligosaccharyltransferase (OST) complex.

Its subcellular location is the endoplasmic reticulum membrane. It functions in the pathway protein modification; protein glycosylation. Its function is as follows. Subunit of the oligosaccharyl transferase (OST) complex that catalyzes the initial transfer of a defined glycan (Glc(3)Man(9)GlcNAc(2) in eukaryotes) from the lipid carrier dolichol-pyrophosphate to an asparagine residue within an Asn-X-Ser/Thr consensus motif in nascent polypeptide chains, the first step in protein N-glycosylation. N-glycosylation occurs cotranslationally and the complex associates with the Sec61 complex at the channel-forming translocon complex that mediates protein translocation across the endoplasmic reticulum (ER). All subunits are required for a maximal enzyme activity. Required for the assembly of both SST3A- and SS3B-containing OST complexes. Required for normal lifespan. This chain is Dolichyl-diphosphooligosaccharide--protein glycosyltransferase 48 kDa subunit, found in Caenorhabditis elegans.